The sequence spans 138 residues: Large ribosomal subunit protein uL16 (138 aa).

The segment covering 1 to 16 (MLIPKRVKYRRQHRPT) has biased composition (basic residues). Residues 1-23 (MLIPKRVKYRRQHRPTRSGVSKG) are disordered.

This sequence belongs to the universal ribosomal protein uL16 family. As to quaternary structure, part of the 50S ribosomal subunit.

Functionally, binds 23S rRNA and is also seen to make contacts with the A and possibly P site tRNAs. The chain is Large ribosomal subunit protein uL16 from Corynebacterium aurimucosum (strain ATCC 700975 / DSM 44827 / CIP 107346 / CN-1) (Corynebacterium nigricans).